The following is a 200-amino-acid chain: Guanylyl cyclase-activating protein 2 (200 aa).

A lipid anchor (N-myristoyl glycine) is attached at G2. EF-hand domains follow at residues 14 to 31, 53 to 88, 89 to 124, and 141 to 176; these read GEIDVAELQEWYKKFVME, EASQYVEGMFRAFDKNGDNTIDFLEYVAALNLVLRG, TLEHKLKWTFKIYDKDGNGCIDRLELLNIVEGIYQL, and TPEEVVDRIFLLVDENGDGQLSLNEFVEGARRDKWV. Ca(2+) contacts are provided by D66, N68, D70, T72, E77, D102, D104, N106, C108, E113, D154, N156, D158, Q160, and E165.

In terms of processing, the N-terminus is blocked. In terms of tissue distribution, in the retina, it is expressed in cone and rod photoreceptor cells.

It is found in the cell membrane. Its subcellular location is the photoreceptor inner segment. The protein localises to the cell projection. The protein resides in the cilium. It localises to the photoreceptor outer segment. Its function is as follows. Stimulates two retinal guanylyl cyclases (GCs) GUCY2D and GUCY2F when free calcium ions concentration is low, and inhibits GUCY2D and GUCY2F when free calcium ions concentration is elevated. This Ca(2+)-sensitive regulation of GCs is a key event in recovery of the dark state of rod photoreceptors following light exposure. May be involved in cone photoreceptor response and recovery of response in bright light. The protein is Guanylyl cyclase-activating protein 2 (GUCA1B) of Homo sapiens (Human).